Reading from the N-terminus, the 244-residue chain is 3-deoxy-manno-octulosonate cytidylyltransferase (244 aa).

The protein belongs to the KdsB family.

The protein resides in the cytoplasm. The catalysed reaction is 3-deoxy-alpha-D-manno-oct-2-ulosonate + CTP = CMP-3-deoxy-beta-D-manno-octulosonate + diphosphate. It participates in nucleotide-sugar biosynthesis; CMP-3-deoxy-D-manno-octulosonate biosynthesis; CMP-3-deoxy-D-manno-octulosonate from 3-deoxy-D-manno-octulosonate and CTP: step 1/1. It functions in the pathway bacterial outer membrane biogenesis; lipopolysaccharide biosynthesis. In terms of biological role, activates KDO (a required 8-carbon sugar) for incorporation into bacterial lipopolysaccharide in Gram-negative bacteria. The polypeptide is 3-deoxy-manno-octulosonate cytidylyltransferase (Rickettsia bellii (strain OSU 85-389)).